A 419-amino-acid chain; its full sequence is G protein-activated inward rectifier potassium channel 4 (419 aa).

The segment at 1–24 (MAGDSRNAMNQDMEIGVTPRDPKK) is disordered. The Cytoplasmic segment spans residues 1–86 (MAGDSRNAMN…LFTTLVDLKW (86 aa)). The residue at position 5 (Ser-5) is a Phosphoserine. A helical membrane pass occupies residues 87–111 (RFNLLVFTMVYTITWLFFGFIWWLI). Over 112–135 (AYIRGDLDHVGDREWIPCVENLSG) the chain is Extracellular. The helical; Pore-forming intramembrane region spans 136-147 (FVSAFLFSIETE). Residues 148–154 (TTIGYGF) constitute an intramembrane region (pore-forming). The short motif at 149-154 (TIGYGF) is the Selectivity filter element. The Extracellular segment spans residues 155–163 (RVITEKCPE). Residues 164–185 (GIVLLLVQAILGSIVNAFMVGC) traverse the membrane as a helical segment. Residues 186–419 (MFVKISQPKK…SGSQETKDSA (234 aa)) lie on the Cytoplasmic side of the membrane. Positions 381–419 (PSPPLPGGCVGAELGAEAEQEGEEEPEGLSGSQETKDSA) are disordered. Acidic residues predominate over residues 396 to 407 (AEAEQEGEEEPE).

Belongs to the inward rectifier-type potassium channel (TC 1.A.2.1) family. KCNJ5 subfamily. As to quaternary structure, associates with KCNJ3/GIRK1 or KCNJ6/GIRK2 to form a G-protein-activated heteromultimer pore-forming unit. The resulting inward current is much larger.

It localises to the membrane. The catalysed reaction is K(+)(in) = K(+)(out). Heteromultimer composed of KCNJ3/GIRK1 and KCNJ5/GIRK4 is activated by phosphatidylinositol 4,5 biphosphate (PtdIns(4,5)P2). Its function is as follows. Inward rectifier potassium channels are characterized by a greater tendency to allow potassium to flow into the cell rather than out of it. Their voltage dependence is regulated by the concentration of extracellular potassium; as external potassium is raised, the voltage range of the channel opening shifts to more positive voltages. The inward rectification is mainly due to the blockage of outward current by internal magnesium. This receptor plays a crucial role in regulating the heartbeat. Can be blocked by external barium. This potassium channel is controlled by G proteins. The chain is G protein-activated inward rectifier potassium channel 4 (KCNJ5) from Bos taurus (Bovine).